A 457-amino-acid polypeptide reads, in one-letter code: Multidrug resistance protein MdtK (457 aa).

The Cytoplasmic portion of the chain corresponds to 1 to 10 (MQKYTSEARQ). Residues 11 to 31 (LLALAIPVILAQVAQTAMGFV) form a helical membrane-spanning segment. Residues 32 to 52 (DTVMAGGYSATDMAAVAIGTS) lie on the Extracellular side of the membrane. The chain crosses the membrane as a helical span at residues 53–73 (IWLPAILFGHGLLLALTPVIA). Over 74 to 92 (QLNGSGRRERIAHQVRQGF) the chain is Cytoplasmic. Residues 93 to 113 (WLAGFVSVLVMIVLWNAGYII) form a helical membrane-spanning segment. Residues 114-126 (RSMHNIDPALADK) are Extracellular-facing. The helical transmembrane segment at 127–147 (AVGYLRALLWGAPGYLFFQVA) threads the bilayer. Over 148-159 (RNQCEGLAKTKP) the chain is Cytoplasmic. The helical transmembrane segment at 160–180 (GMVMGFLGLLVNIPVNYIFIY) threads the bilayer. Topologically, residues 181–187 (GHFGMPE) are extracellular. Residues 188–208 (LGGIGCGVATAAVYWVMFIAM) traverse the membrane as a helical segment. The Cytoplasmic portion of the chain corresponds to 209–242 (LSYIKHARSMRDIRNEKGFGKPDSVVMKRLIQLG). The helical transmembrane segment at 243 to 263 (LPIALALFFEVTLFAVVALLV) threads the bilayer. The Extracellular portion of the chain corresponds to 264-275 (SPLGIVDVAGHQ). A helical transmembrane segment spans residues 276–296 (IALNFSSLMFVLPMSLAAAVT). At 297–313 (IRVGYRLGQGSTLDAQT) the chain is on the cytoplasmic side. A helical membrane pass occupies residues 314-334 (AARTGLGVGICMAVVTAIFTV). Over 335–349 (TLRKHIALLYNDNPE) the chain is Extracellular. Residues 350–370 (VVALAAQLMLLAAVYQISDSI) traverse the membrane as a helical segment. Topologically, residues 371-386 (QIIGSGILRGYKDTRS) are cytoplasmic. A helical transmembrane segment spans residues 387–407 (IFFITFTAYWVLGLPSGYILA). Residues 408–417 (LTDLVVDRMG) are Extracellular-facing. A helical membrane pass occupies residues 418-438 (PAGFWMGFIIGLTSAAVLMML). The Cytoplasmic portion of the chain corresponds to 439–457 (RMRYLQRQPSAIILQRAAR).

Belongs to the multi antimicrobial extrusion (MATE) (TC 2.A.66.1) family. MdtK subfamily.

Its subcellular location is the cell inner membrane. In terms of biological role, multidrug efflux pump that functions probably as a Na(+)/drug antiporter. This Salmonella choleraesuis (strain SC-B67) protein is Multidrug resistance protein MdtK (mdtK).